The following is a 342-amino-acid chain: Protein RecA (342 aa).

This sequence belongs to the RecA family.

The protein localises to the cytoplasm. Functionally, can catalyze the hydrolysis of ATP in the presence of single-stranded DNA, the ATP-dependent uptake of single-stranded DNA by duplex DNA, and the ATP-dependent hybridization of homologous single-stranded DNAs. It interacts with LexA causing its activation and leading to its autocatalytic cleavage. The protein is Protein RecA of Pectobacterium carotovorum (Erwinia carotovora).